The following is a 253-amino-acid chain: Tryptophan synthase alpha chain (253 aa).

Catalysis depends on proton acceptor residues E47 and D58.

This sequence belongs to the TrpA family. Tetramer of two alpha and two beta chains.

The catalysed reaction is (1S,2R)-1-C-(indol-3-yl)glycerol 3-phosphate + L-serine = D-glyceraldehyde 3-phosphate + L-tryptophan + H2O. The protein operates within amino-acid biosynthesis; L-tryptophan biosynthesis; L-tryptophan from chorismate: step 5/5. Its function is as follows. The alpha subunit is responsible for the aldol cleavage of indoleglycerol phosphate to indole and glyceraldehyde 3-phosphate. The sequence is that of Tryptophan synthase alpha chain from Lactococcus lactis subsp. cremoris (strain MG1363).